The chain runs to 537 residues: Oviduct-specific glycoprotein (537 aa).

The signal sequence occupies residues 1 to 18 (LLLCVGLLLVLKHHDGAA). Residues 19–382 (HKLVCYFTNW…HTLNNLLVND (364 aa)) form the GH18 domain. A disulfide bridge links Cys23 with Cys48. Chitin-binding positions include 68-69 (PQ), 95-98 (GGWN), Tyr139, 208-211 (LSYD), and Trp352. Residue Asn399 is glycosylated (N-linked (GlcNAc...) asparagine). Disordered regions lie at residues 446–475 (EIAT…GEKP) and 498–537 (TGQK…ERRL). Residues 528–537 (GRAETLERRL) are compositionally biased toward basic and acidic residues.

The protein belongs to the glycosyl hydrolase 18 family. Oviduct.

Its subcellular location is the cytoplasmic vesicle. It localises to the secretory vesicle. Its function is as follows. Binds to oocyte zona pellucida in vivo. May play a role in the fertilization process and/or early embryonic development. In Bos taurus (Bovine), this protein is Oviduct-specific glycoprotein (OVGP1).